Here is a 228-residue protein sequence, read N- to C-terminus: Serum amyloid P-component (228 aa).

Residues methionine 1–alanine 20 form the signal peptide. In terms of domain architecture, Pentraxin (PTX) spans asparagine 25 to aspartate 224. The N-linked (GlcNAc...) asparagine glycan is linked to asparagine 52. A disulfide bridge links cysteine 56 with cysteine 115. Ca(2+) contacts are provided by aspartate 78, asparagine 79, glutamate 156, glutamine 157, aspartate 158, and glutamine 168.

The protein belongs to the pentraxin family. As to quaternary structure, homopentamer. Pentraxin (or pentaxin) have a discoid arrangement of 5 non-covalently bound subunits. Ca(2+) serves as cofactor.

It is found in the secreted. In Rattus norvegicus (Rat), this protein is Serum amyloid P-component (Apcs).